We begin with the raw amino-acid sequence, 153 residues long: Ribosome maturation factor RimP (153 aa).

It belongs to the RimP family.

Its subcellular location is the cytoplasm. Functionally, required for maturation of 30S ribosomal subunits. This is Ribosome maturation factor RimP from Actinobacillus pleuropneumoniae serotype 5b (strain L20).